The primary structure comprises 415 residues: MKNVIGLILAGGQGTRLGVLTEKIPKPAVQFGGKYRIIDFTLSNCVNSGIYRIGVLTQYRPHLLNKHIGIGKPWDLDRKGGGVTILQPYSTLTESVWYKGTADAVYQNIEFVDEYNPEYIVVLSGDHIYSMDYSEFVYYHISKGALATIACMEVPITEAHRFGIMVTDIENKIIEFQEKPKNPKSNLASLGIYVFTWNFIKEVLIEDSKDNSSDHDFGKNIIPKILSTGKVYAYPFEGYWQDVGTIQSYWETNLELVRPIPPFNLHDPNWRFYTRSEEMNPAYISENGNVRNSIISEGCEIYGSVENSVISQGVFIDEGAIVKNSVIMTKVEVGKNVIIEDAIIAENTIIKDGCKIGVGHFAESKYDKKVYNSPITVVGMDSIVEENCKIGKNVVIGNDKIVSANTVIDSGGYLI.

Alpha-D-glucose 1-phosphate-binding positions include Y98, G163, 178 to 179, and S189; that span reads EK.

This sequence belongs to the bacterial/plant glucose-1-phosphate adenylyltransferase family. In terms of assembly, homotetramer.

The enzyme catalyses alpha-D-glucose 1-phosphate + ATP + H(+) = ADP-alpha-D-glucose + diphosphate. The protein operates within glycan biosynthesis; glycogen biosynthesis. Functionally, involved in the biosynthesis of ADP-glucose, a building block required for the elongation reactions to produce glycogen. Catalyzes the reaction between ATP and alpha-D-glucose 1-phosphate (G1P) to produce pyrophosphate and ADP-Glc. This chain is Glucose-1-phosphate adenylyltransferase, found in Fervidobacterium nodosum (strain ATCC 35602 / DSM 5306 / Rt17-B1).